The following is a 211-amino-acid chain: Holliday junction resolvase RecU (211 aa).

The Mg(2+) site is built by Thr87, Asp89, Asp102, and Gln121.

The protein belongs to the RecU family. The cofactor is Mg(2+).

It localises to the cytoplasm. It catalyses the reaction Endonucleolytic cleavage at a junction such as a reciprocal single-stranded crossover between two homologous DNA duplexes (Holliday junction).. Endonuclease that resolves Holliday junction intermediates in genetic recombination. Cleaves mobile four-strand junctions by introducing symmetrical nicks in paired strands. Promotes annealing of linear ssDNA with homologous dsDNA. Required for DNA repair, homologous recombination and chromosome segregation. The polypeptide is Holliday junction resolvase RecU (Limosilactobacillus fermentum (strain NBRC 3956 / LMG 18251) (Lactobacillus fermentum)).